The sequence spans 702 residues: DnaJ homolog subfamily C member 14 (702 aa).

2 disordered regions span residues 1-148 (MAQK…GGNG) and 165-229 (DELE…KRSQ). Residues 75-84 (HGPPGGPGPP) are compositionally biased toward pro residues. Positions 88-103 (EDPDQSETSSEEESGV) are enriched in acidic residues. Polar residues predominate over residues 113–133 (TGNQKDGNSFLSIPSACNCQG). Residues 165 to 175 (DELEEEYDDEE) are compositionally biased toward acidic residues. Over residues 192-201 (PPSRRQRHRF) the composition is skewed to basic residues. Residues 202 to 217 (PTKEDTREGGRRDPRS) are compositionally biased toward basic and acidic residues. Positions 218–227 (PGRHRLGRKR) are enriched in basic residues. Transmembrane regions (helical) follow at residues 250-270 (AGFW…ETCG), 300-320 (GWAQ…VGLF), and 326-346 (LLGA…QLGW). Positions 443–507 (NPFHVLGVEA…EKRKEYEMKR (65 aa)) constitute a J domain. Residues 658–702 (MPNGNFFAAPQPAPGAAAASKPNSTVPKGEAKPKRRKKVRRPFQR) form a disordered region. Low complexity predominate over residues 659-676 (PNGNFFAAPQPAPGAAAA). The segment covering 690–702 (PKRRKKVRRPFQR) has biased composition (basic residues).

In terms of assembly, interacts with the FxxxFxxxF motif of DRD1 via its C-terminal domain. As to expression, highly expressed in pancreas and selectively expressed in brain, lung, liver, skeletal muscle and kidney.

The protein localises to the endoplasmic reticulum membrane. Functionally, regulates the export of target proteins, such as DRD1, from the endoplasmic reticulum to the cell surface. The sequence is that of DnaJ homolog subfamily C member 14 (DNAJC14) from Homo sapiens (Human).